Reading from the N-terminus, the 151-residue chain is Chromophore lyase CpcS/CpeS homolog (151 aa).

The protein belongs to the CpcS/CpeS biliprotein lyase family.

Its subcellular location is the plastid. It localises to the chloroplast. Its function is as follows. Might function to covalently attach a chromophore to Cys residue(s) of phycobiliproteins. The protein is Chromophore lyase CpcS/CpeS homolog of Gracilaria tenuistipitata var. liui (Red alga).